Consider the following 345-residue polypeptide: Aminopeptidase YpdE (345 aa).

The a divalent metal cation site is built by histidine 62 and aspartate 166. Residue glutamate 198 is the Proton acceptor of the active site. Residues glutamate 199, aspartate 221, and histidine 308 each contribute to the a divalent metal cation site.

The protein belongs to the peptidase M42 family. Co(2+) serves as cofactor. The cofactor is Ni(2+). Mn(2+) is required as a cofactor. Requires Cu(2+) as cofactor.

Its function is as follows. Has a broad aminopeptidase activity on non-blocked peptides by progressively cleaving amino acids off the peptide substrate. Aminopeptidase activity stops at the residue before the first proline in the peptide. Cannot cleave when proline is the first N-terminal residue. This Escherichia coli (strain K12) protein is Aminopeptidase YpdE (ypdE).